Here is a 364-residue protein sequence, read N- to C-terminus: S-adenosylmethionine:tRNA ribosyltransferase-isomerase (364 aa).

This sequence belongs to the QueA family. Monomer.

It is found in the cytoplasm. It catalyses the reaction 7-aminomethyl-7-carbaguanosine(34) in tRNA + S-adenosyl-L-methionine = epoxyqueuosine(34) in tRNA + adenine + L-methionine + 2 H(+). It functions in the pathway tRNA modification; tRNA-queuosine biosynthesis. Transfers and isomerizes the ribose moiety from AdoMet to the 7-aminomethyl group of 7-deazaguanine (preQ1-tRNA) to give epoxyqueuosine (oQ-tRNA). In Bradyrhizobium sp. (strain ORS 278), this protein is S-adenosylmethionine:tRNA ribosyltransferase-isomerase.